Consider the following 286-residue polypeptide: MRNHQLGIYEKALAKDLSWPERLVLAKSCGFDFVEMSVDETDERLSRLDWSAAQRTSLVAAMIETGVGIPSMCLSAHRRFPFGSRDEAVRERAREIMSKAIRLARDLGIRTIQLAGYDVYYEDHDEGTRQRFAEGLAWAVEQAAASQVMLAVEIMDTAFMNSISKWKKWDEMLASPWFTVYPDVGNLSAWGNDVPAELKLGIDRIAAIHLKDTQPVTGQSPGQFRDVPFGEGCVDFVGIFKTLHKLNYRGSFLIEMWTEKAKEPVLEIIQARRWIEARMQEAGFIC.

It belongs to the L-ribulose-5-phosphate 3-epimerase family.

It carries out the reaction L-ribulose 5-phosphate = L-xylulose 5-phosphate. Functionally, catalyzes the isomerization of L-xylulose-5-phosphate to L-ribulose-5-phosphate (Potential). May be involved in the utilization of 2,3-diketo-L-gulonate. The polypeptide is Putative L-ribulose-5-phosphate 3-epimerase SgbU (sgbU) (Escherichia coli (strain K12)).